Reading from the N-terminus, the 446-residue chain is Long-chain fatty acid transport protein (446 aa).

A signal peptide spans 1 to 25 (MSQKTLFTKSALAVAVALISTQAWS).

It belongs to the OmpP1/FadL family. Has been isolated from outer membrane preparation as a homodimer.

It localises to the cell outer membrane. Its function is as follows. Involved in translocation of long-chain fatty acids across the outer membrane. It is a receptor for the bacteriophage T2. FadL may form a specific channel. The protein is Long-chain fatty acid transport protein (fadL) of Escherichia coli (strain K12).